The sequence spans 1083 residues: UPF0182 protein BAD_0641 (1083 aa).

A disordered region spans residues 1-72; the sequence is MSFFDMFGPM…TSKPNRPRKP (72 aa). Transmembrane regions (helical) follow at residues 78-98, 125-145, 178-198, 239-259, 281-301, 325-345, and 372-392; these read IFIG…ALAQ, LWLA…TLAI, IAVV…NANW, SLLL…MGGI, IGIW…LGVF, VTFI…LWIM, and VAIA…PVLL. The tract at residues 976–1061 is disordered; the sequence is DSGASAGDAE…SDAAMKKGDW (86 aa). Basic and acidic residues-rich tracts occupy residues 991 to 1013 and 1050 to 1060; these read TDDK…DGKQ and KDSDAAMKKGD.

Belongs to the UPF0182 family.

Its subcellular location is the cell membrane. The chain is UPF0182 protein BAD_0641 from Bifidobacterium adolescentis (strain ATCC 15703 / DSM 20083 / NCTC 11814 / E194a).